Here is a 206-residue protein sequence, read N- to C-terminus: Putative metal transport protein HI_1621 (206 aa).

The next 6 membrane-spanning stretches (helical) occupy residues 6 to 26 (GVLHTPILLAGAVLAVAGIAV), 38 to 58 (LTALFAAAFFVAGTIHVPVGI), 72 to 92 (FLGWAVFPAFLIALLLQVIFF), 94 to 114 (FGGFAVLGVNLCVMATPAVIA), 136 to 156 (IGAGVIGVGGAGALASFVLML), and 165 to 185 (LVWLLLVSHIPVFILDSIISV).

It belongs to the CbiM family.

It localises to the cell membrane. Functionally, may be involved in metal transport. The protein is Putative metal transport protein HI_1621 of Haemophilus influenzae (strain ATCC 51907 / DSM 11121 / KW20 / Rd).